A 454-amino-acid chain; its full sequence is Bifunctional protein GlmU (454 aa).

The interval 1 to 226 (MSLEIVILAA…AMEVQGVNDR (226 aa)) is pyrophosphorylase. Residues 8–11 (LAAG), Lys22, Gln73, 78–79 (GT), 99–101 (YGD), Gly136, Glu151, Asn166, and Asn224 each bind UDP-N-acetyl-alpha-D-glucosamine. Residue Asp101 participates in Mg(2+) binding. Asn224 contacts Mg(2+). The linker stretch occupies residues 227–247 (MQQAQLERHYQRLRAEELMRQ). Residues 248–454 (GVTLLDPQRL…NWKRPEKIKK (207 aa)) form an N-acetyltransferase region. Arg330 and Lys348 together coordinate UDP-N-acetyl-alpha-D-glucosamine. The active-site Proton acceptor is the His360. UDP-N-acetyl-alpha-D-glucosamine is bound by residues Tyr363 and Asn374. Acetyl-CoA-binding positions include Ala377, 383–384 (NY), Ser402, Ala420, and Arg437.

It in the N-terminal section; belongs to the N-acetylglucosamine-1-phosphate uridyltransferase family. This sequence in the C-terminal section; belongs to the transferase hexapeptide repeat family. Homotrimer. Requires Mg(2+) as cofactor.

The protein localises to the cytoplasm. The catalysed reaction is alpha-D-glucosamine 1-phosphate + acetyl-CoA = N-acetyl-alpha-D-glucosamine 1-phosphate + CoA + H(+). It catalyses the reaction N-acetyl-alpha-D-glucosamine 1-phosphate + UTP + H(+) = UDP-N-acetyl-alpha-D-glucosamine + diphosphate. It participates in nucleotide-sugar biosynthesis; UDP-N-acetyl-alpha-D-glucosamine biosynthesis; N-acetyl-alpha-D-glucosamine 1-phosphate from alpha-D-glucosamine 6-phosphate (route II): step 2/2. It functions in the pathway nucleotide-sugar biosynthesis; UDP-N-acetyl-alpha-D-glucosamine biosynthesis; UDP-N-acetyl-alpha-D-glucosamine from N-acetyl-alpha-D-glucosamine 1-phosphate: step 1/1. The protein operates within bacterial outer membrane biogenesis; LPS lipid A biosynthesis. Its function is as follows. Catalyzes the last two sequential reactions in the de novo biosynthetic pathway for UDP-N-acetylglucosamine (UDP-GlcNAc). The C-terminal domain catalyzes the transfer of acetyl group from acetyl coenzyme A to glucosamine-1-phosphate (GlcN-1-P) to produce N-acetylglucosamine-1-phosphate (GlcNAc-1-P), which is converted into UDP-GlcNAc by the transfer of uridine 5-monophosphate (from uridine 5-triphosphate), a reaction catalyzed by the N-terminal domain. This chain is Bifunctional protein GlmU, found in Pseudomonas aeruginosa (strain LESB58).